The chain runs to 251 residues: Imidazole glycerol phosphate synthase subunit HisF (251 aa).

Residues D11 and D130 contribute to the active site.

This sequence belongs to the HisA/HisF family. Heterodimer of HisH and HisF.

Its subcellular location is the cytoplasm. The enzyme catalyses 5-[(5-phospho-1-deoxy-D-ribulos-1-ylimino)methylamino]-1-(5-phospho-beta-D-ribosyl)imidazole-4-carboxamide + L-glutamine = D-erythro-1-(imidazol-4-yl)glycerol 3-phosphate + 5-amino-1-(5-phospho-beta-D-ribosyl)imidazole-4-carboxamide + L-glutamate + H(+). It functions in the pathway amino-acid biosynthesis; L-histidine biosynthesis; L-histidine from 5-phospho-alpha-D-ribose 1-diphosphate: step 5/9. In terms of biological role, IGPS catalyzes the conversion of PRFAR and glutamine to IGP, AICAR and glutamate. The HisF subunit catalyzes the cyclization activity that produces IGP and AICAR from PRFAR using the ammonia provided by the HisH subunit. This Chloroherpeton thalassium (strain ATCC 35110 / GB-78) protein is Imidazole glycerol phosphate synthase subunit HisF.